A 2080-amino-acid chain; its full sequence is Dedicator of cytokinesis protein 6 (2080 aa).

Residues 20-31 are compositionally biased toward basic and acidic residues; sequence EVRKQVSRERSG. Disordered regions lie at residues 20–44, 156–189, and 408–441; these read EVRK…SSLG, QDTP…SGAS, and PQDR…GDDA. Over residues 32–42 the composition is skewed to low complexity; the sequence is SPHSSRRSSSS. Ser178 is subject to Phosphoserine. Over residues 408–425 the composition is skewed to basic and acidic residues; that stretch reads PQDRDSDSEGERRPTWAE. In terms of domain architecture, C2 DOCK-type spans 546–712; that stretch reads RNLLFVYPHS…GVFSVELTAV (167 aa). An Omega-N-methylarginine modification is found at Arg863. Phosphoserine is present on residues Ser870, Ser878, and Ser882. The disordered stretch occupies residues 1101-1123; it reads ASPSPSVSSTTSQSSTFSSQAPD. Low complexity predominate over residues 1104-1122; the sequence is SPSVSSTTSQSSTFSSQAP. The residue at position 1341 (Ser1341) is a Phosphoserine. A DOCKER domain is found at 1620-2056; the sequence is RGYQGSPDLR…LQPLLTQRLP (437 aa). Phosphothreonine is present on Thr2064. Phosphoserine is present on residues Ser2065 and Ser2069.

It belongs to the DOCK family. As to expression, widely expressed with highest levels in lung and heart.

The protein localises to the cytoplasm. Its subcellular location is the perinuclear region. Acts as a guanine nucleotide exchange factor (GEF) for CDC42 and RAC1 small GTPases. Through its activation of CDC42 and RAC1, regulates neurite outgrowth in an vitro differentiation system. This Mus musculus (Mouse) protein is Dedicator of cytokinesis protein 6 (Dock6).